A 261-amino-acid polypeptide reads, in one-letter code: tRNA pseudouridine synthase A (261 aa).

Residue D51 is the Nucleophile of the active site. Substrate is bound at residue Y109.

It belongs to the tRNA pseudouridine synthase TruA family. As to quaternary structure, homodimer.

The catalysed reaction is uridine(38/39/40) in tRNA = pseudouridine(38/39/40) in tRNA. In terms of biological role, formation of pseudouridine at positions 38, 39 and 40 in the anticodon stem and loop of transfer RNAs. The sequence is that of tRNA pseudouridine synthase A from Shewanella sp. (strain W3-18-1).